Consider the following 194-residue polypeptide: Peptidyl-tRNA hydrolase (194 aa).

Tyr-16 contributes to the tRNA binding site. His-21 functions as the Proton acceptor in the catalytic mechanism. Positions 67, 69, and 115 each coordinate tRNA.

This sequence belongs to the PTH family. Monomer.

It is found in the cytoplasm. It carries out the reaction an N-acyl-L-alpha-aminoacyl-tRNA + H2O = an N-acyl-L-amino acid + a tRNA + H(+). In terms of biological role, hydrolyzes ribosome-free peptidyl-tRNAs (with 1 or more amino acids incorporated), which drop off the ribosome during protein synthesis, or as a result of ribosome stalling. Its function is as follows. Catalyzes the release of premature peptidyl moieties from peptidyl-tRNA molecules trapped in stalled 50S ribosomal subunits, and thus maintains levels of free tRNAs and 50S ribosomes. The protein is Peptidyl-tRNA hydrolase of Citrobacter koseri (strain ATCC BAA-895 / CDC 4225-83 / SGSC4696).